Here is a 135-residue protein sequence, read N- to C-terminus: Large ribosomal subunit protein uL16c (135 aa).

It belongs to the universal ribosomal protein uL16 family. Part of the 50S ribosomal subunit.

It localises to the plastid. It is found in the chloroplast. The sequence is that of Large ribosomal subunit protein uL16c from Lotus japonicus (Lotus corniculatus var. japonicus).